The chain runs to 127 residues: Small ribosomal subunit protein uS13 (127 aa).

The segment at 97–127 is disordered; the sequence is PVRGQRTRTNARTRRGRRVTVAGKKKAPSKK. The segment covering 101 to 127 has biased composition (basic residues); sequence QRTRTNARTRRGRRVTVAGKKKAPSKK.

It belongs to the universal ribosomal protein uS13 family. As to quaternary structure, part of the 30S ribosomal subunit. Forms a loose heterodimer with protein S19. Forms two bridges to the 50S subunit in the 70S ribosome.

Its function is as follows. Located at the top of the head of the 30S subunit, it contacts several helices of the 16S rRNA. In the 70S ribosome it contacts the 23S rRNA (bridge B1a) and protein L5 of the 50S subunit (bridge B1b), connecting the 2 subunits; these bridges are implicated in subunit movement. Contacts the tRNAs in the A and P-sites. This chain is Small ribosomal subunit protein uS13, found in Microcystis aeruginosa (strain NIES-843 / IAM M-2473).